Here is a 257-residue protein sequence, read N- to C-terminus: MPVLTMKQLLEAGVHFGHQTRRWNPKMAEYIFTERNGIYIIDLQKTVKKMDEAYEFVKSQVAEGKIVLFVGTKKQAQETIKEEAERCGMFYINQRWLGGLLTNFRTIKTRIERLKELQRMEEDGTFEVLPKKEVNLLRKEKERLLKYLGGIQNMPRIPDILYIVDPRKERNAVLEARKLGIPIVAIVDTNCDPDEIDYVIPGNDDAIRAVKLITSKIADAVIEGREGEQFTPATTSSQEVDKASEQVEIAADDIDEE.

The segment at 229–257 (QFTPATTSSQEVDKASEQVEIAADDIDEE) is disordered.

This sequence belongs to the universal ribosomal protein uS2 family.

In Caldicellulosiruptor bescii (strain ATCC BAA-1888 / DSM 6725 / KCTC 15123 / Z-1320) (Anaerocellum thermophilum), this protein is Small ribosomal subunit protein uS2.